Reading from the N-terminus, the 461-residue chain is Cysteine--tRNA ligase (461 aa).

Cys-28 provides a ligand contact to Zn(2+). Residues 30-40 (VTIYDLCHIGH) carry the 'HIGH' region motif. Residues Cys-209, His-234, and Glu-238 each contribute to the Zn(2+) site. Positions 266-270 (KMSKS) match the 'KMSKS' region motif. Lys-269 is an ATP binding site.

Belongs to the class-I aminoacyl-tRNA synthetase family. In terms of assembly, monomer. Zn(2+) serves as cofactor.

Its subcellular location is the cytoplasm. The enzyme catalyses tRNA(Cys) + L-cysteine + ATP = L-cysteinyl-tRNA(Cys) + AMP + diphosphate. This is Cysteine--tRNA ligase from Vibrio atlanticus (strain LGP32) (Vibrio splendidus (strain Mel32)).